Reading from the N-terminus, the 696-residue chain is Glycosyltransferase GlyA (696 aa).

The tract at residues 1–301 is GT2 domain; it reads MLVDDKITVI…NQLSRQEESE (301 aa). The GT8 domain stretch occupies residues 302–556; that stretch reads KKAIVLAANY…TELGQNHHLH (255 aa). Residues 308 to 313 and 399 to 400 each bind UDP; these read AANYGY and DC. The Mn(2+) site is built by D399, D401, and H518. 518–524 is a binding site for UDP; the sequence is HYLSHRK.

In the N-terminal section; belongs to the glycosyltransferase 2 family. This sequence in the central section; belongs to the glycosyltransferase 8 family.

It functions in the pathway protein modification; protein glycosylation. Functionally, involved in the polymorphic O-glycosylation of the serine-rich repeat protein PsrP. Catalyzes the fourth step in glycosylation of PsrP in this bacteria. Can transfer the sugar from UDP-galactose to the terminal sugar moiety of PsrP-GlcNAc-Glc-Gal or of PsrP-GlcNAc-Glc-Glc (using truncated substrates with the PsrP SSR1 domain). Has hydrolytic activity against UDP-galactose and to a lesser extent against UDP-glucose. This is Glycosyltransferase GlyA from Streptococcus pneumoniae serotype 4 (strain ATCC BAA-334 / TIGR4).